We begin with the raw amino-acid sequence, 675 residues long: Dihydrolipoyllysine-residue acetyltransferase component of pyruvate dehydrogenase complex (675 aa).

Positions 2–77 (AFSVEMPELG…DVGGVIAIIG (76 aa)) constitute a Lipoyl-binding 1 domain. Lys43 carries the post-translational modification N6-lipoyllysine. The tract at residues 77–124 (GDADETPANEAPADEAPAPAEEEEPVKEEPKKEAAPEAPAATGAATDV) is disordered. Low complexity-rich tracts occupy residues 84–95 (ANEAPADEAPAP) and 112–124 (PEAP…ATDV). A Lipoyl-binding 2 domain is found at 121 to 196 (ATDVEMPELG…DVGAVIARIG (76 aa)). N6-lipoyllysine is present on Lys162. Positions 200–240 (AAAAPAEEEAAPAEEEEPVKEEPKKEAAPEAPAATGAATDV) are disordered. Over residues 205–218 (AEEEAAPAEEEEPV) the composition is skewed to acidic residues. A Lipoyl-binding 3 domain is found at 237–312 (ATDVEMPELG…DVGAVIARIG (76 aa)). At Lys278 the chain carries N6-lipoyllysine. A disordered region spans residues 316–368 (AAAAPAEEEAAPAEEEEPVKEEPKKEEPKKEEPKKEAATTPAAASATVSASGD). Residues 321–334 (AEEEAAPAEEEEPV) show a composition bias toward acidic residues. A compositionally biased stretch (basic and acidic residues) spans 335–352 (KEEPKKEEPKKEEPKKEA). Low complexity predominate over residues 353–366 (ATTPAAASATVSAS). In terms of domain architecture, Peripheral subunit-binding (PSBD) spans 372-409 (YVTPLVRKLAEKHGVDLNTVTGTGIGGRIRKQDVLAAA). Residues His645 and Asp649 contribute to the active site.

This sequence belongs to the 2-oxoacid dehydrogenase family. As to quaternary structure, forms a 24-polypeptide structural core with octahedral symmetry. Part of an unusual ODH/PDH supercomplex, consisting of AceE (E1), AceF (E2), and Lpd (E3) together with OdhA (E1+E2). (R)-lipoate serves as cofactor.

It catalyses the reaction N(6)-[(R)-dihydrolipoyl]-L-lysyl-[protein] + acetyl-CoA = N(6)-[(R)-S(8)-acetyldihydrolipoyl]-L-lysyl-[protein] + CoA. Functionally, is essential for both 2-oxoglutarate dehydrogenase (ODH) and pyruvate dehydrogenase (PDH) activities, but AceF has exclusively transacetylase (and no transsuccinylase) activity. The lipoyl residues required for ODH activity are likely provided by AceF. In Corynebacterium glutamicum (strain ATCC 13032 / DSM 20300 / JCM 1318 / BCRC 11384 / CCUG 27702 / LMG 3730 / NBRC 12168 / NCIMB 10025 / NRRL B-2784 / 534), this protein is Dihydrolipoyllysine-residue acetyltransferase component of pyruvate dehydrogenase complex (aceF).